The following is a 268-amino-acid chain: Bis(5'-nucleosyl)-tetraphosphatase, symmetrical (268 aa).

The protein belongs to the Ap4A hydrolase family.

It catalyses the reaction P(1),P(4)-bis(5'-adenosyl) tetraphosphate + H2O = 2 ADP + 2 H(+). Functionally, hydrolyzes diadenosine 5',5'''-P1,P4-tetraphosphate to yield ADP. This is Bis(5'-nucleosyl)-tetraphosphatase, symmetrical from Nitrosomonas europaea (strain ATCC 19718 / CIP 103999 / KCTC 2705 / NBRC 14298).